Consider the following 578-residue polypeptide: Vacuolar protein 8 (578 aa).

Glycine 2 carries the N-myristoyl glycine lipid modification. Residues cysteine 4, cysteine 5, and cysteine 7 are each lipidated (S-palmitoyl cysteine). A phosphoserine mark is found at serine 11 and serine 16. 9 ARM repeats span residues 37–75 (DKDQ…AEIT), 76–114 (EKYV…NLAV), 116–155 (NENK…NLAT), 157–196 (DDNK…NMTH), 198–237 (EENR…NIAV), 239–280 (EANR…NLAS), 282–321 (TSYQ…NISI), 323–363 (PLNE…NLAA), and 407–446 (DVSK…NLCS). Lysine 77 participates in a covalent cross-link: Glycyl lysine isopeptide (Lys-Gly) (interchain with G-Cter in ubiquitin). Lysine 515 is covalently cross-linked (Glycyl lysine isopeptide (Lys-Gly) (interchain with G-Cter in ubiquitin)). Residues 527 to 557 (SGIDVKNPGSNNNPSSNDNNSNNNDTGSEHQ) are disordered. Residues 533-552 (NPGSNNNPSSNDNNSNNNDT) are compositionally biased toward low complexity.

Belongs to the beta-catenin family. As to quaternary structure, interacts with NVJ1. Forms heterotetramers of two VAC8 and two NVJ1 or two VAC8 and two ATG13. In terms of processing, palmitoylated on one or more of its N-terminal cysteine residues by PFA3, which is required for vacuole fusion.

It is found in the vacuole membrane. Functionally, functions in both vacuole inheritance and protein targeting from the cytoplasm to vacuole (cvt). Involved in the formation of nucleus-vacuole junctions (NVJs) during piecemeal microautophagy of the nucleus (PMN). NVJs are interorganelle interfaces mediated by NVJ1 in the nuclear envelope and VAC8 on the vacuole membrane. Together, NVJ1 and VAC8 form Velcro-like patches through which teardrop-like portions of the nucleus are pinched off into the vacuolar lumen and degraded by the PMN process. The sequence is that of Vacuolar protein 8 (VAC8) from Saccharomyces cerevisiae (strain ATCC 204508 / S288c) (Baker's yeast).